Consider the following 332-residue polypeptide: Ferredoxin--NADP reductase (332 aa).

FAD contacts are provided by Thr-20, Glu-39, Gln-47, Tyr-52, Val-92, Phe-126, Asp-288, and Thr-329.

Belongs to the ferredoxin--NADP reductase type 2 family. In terms of assembly, homodimer. Requires FAD as cofactor.

It carries out the reaction 2 reduced [2Fe-2S]-[ferredoxin] + NADP(+) + H(+) = 2 oxidized [2Fe-2S]-[ferredoxin] + NADPH. This Geobacillus kaustophilus (strain HTA426) protein is Ferredoxin--NADP reductase.